The following is a 557-amino-acid chain: Dihydroxy-acid dehydratase (557 aa).

Cys49 provides a ligand contact to [2Fe-2S] cluster. Asp81 provides a ligand contact to Mg(2+). A [2Fe-2S] cluster-binding site is contributed by Cys122. Mg(2+)-binding residues include Asp123 and Lys124. Lys124 bears the N6-carboxylysine mark. Cys194 contributes to the [2Fe-2S] cluster binding site. Glu446 contributes to the Mg(2+) binding site. Ser472 serves as the catalytic Proton acceptor.

Belongs to the IlvD/Edd family. In terms of assembly, homodimer. It depends on [2Fe-2S] cluster as a cofactor. The cofactor is Mg(2+).

The enzyme catalyses (2R)-2,3-dihydroxy-3-methylbutanoate = 3-methyl-2-oxobutanoate + H2O. It carries out the reaction (2R,3R)-2,3-dihydroxy-3-methylpentanoate = (S)-3-methyl-2-oxopentanoate + H2O. The protein operates within amino-acid biosynthesis; L-isoleucine biosynthesis; L-isoleucine from 2-oxobutanoate: step 3/4. It functions in the pathway amino-acid biosynthesis; L-valine biosynthesis; L-valine from pyruvate: step 3/4. In terms of biological role, functions in the biosynthesis of branched-chain amino acids. Catalyzes the dehydration of (2R,3R)-2,3-dihydroxy-3-methylpentanoate (2,3-dihydroxy-3-methylvalerate) into 2-oxo-3-methylpentanoate (2-oxo-3-methylvalerate) and of (2R)-2,3-dihydroxy-3-methylbutanoate (2,3-dihydroxyisovalerate) into 2-oxo-3-methylbutanoate (2-oxoisovalerate), the penultimate precursor to L-isoleucine and L-valine, respectively. The polypeptide is Dihydroxy-acid dehydratase (Prochlorococcus marinus (strain MIT 9312)).